The following is a 360-amino-acid chain: DNA replication and repair protein RecF (360 aa).

Position 30–37 (30–37 (GHNGSGKT)) interacts with ATP.

This sequence belongs to the RecF family.

It is found in the cytoplasm. Its function is as follows. The RecF protein is involved in DNA metabolism; it is required for DNA replication and normal SOS inducibility. RecF binds preferentially to single-stranded, linear DNA. It also seems to bind ATP. The protein is DNA replication and repair protein RecF of Shewanella pealeana (strain ATCC 700345 / ANG-SQ1).